A 663-amino-acid chain; its full sequence is Polyunsaturated fatty acid lipoxygenase ALOX15 (663 aa).

A PLAT domain is found at 2 to 115 (GVYRVCVSTG…VQSLPVGTGC (114 aa)). One can recognise a Lipoxygenase domain in the interval 116 to 663 (TTVGDPQGLF…PSIVENSVAI (548 aa)). Residues His361, His366, His541, His545, and Ile663 each contribute to the Fe cation site.

This sequence belongs to the lipoxygenase family. Interacts with PEBP1; in response to IL13/interleukin-13, prevents the interaction of PEBP1 with RAF1 to activate the ERK signaling cascade. It depends on Fe cation as a cofactor. In terms of tissue distribution, detected in reticulocytes (at protein level).

Its subcellular location is the cytoplasm. It localises to the cytosol. The protein localises to the cell membrane. It is found in the lipid droplet. The enzyme catalyses (5Z,8Z,11Z,14Z)-eicosatetraenoate + O2 = (12S)-hydroperoxy-(5Z,8Z,10E,14Z)-eicosatetraenoate. It carries out the reaction (5Z,8Z,11Z,14Z)-eicosatetraenoate + O2 = (15S)-hydroperoxy-(5Z,8Z,11Z,13E)-eicosatetraenoate. The catalysed reaction is (9Z,12Z)-octadecadienoate + O2 = (13S)-hydroperoxy-(9Z,11E)-octadecadienoate. It catalyses the reaction (5Z,8Z,11Z,14Z)-eicosatetraenoate + 2 O2 = (14R,15S)-dihydroperoxy-(5Z,8Z,10E,12E)-eicosatetraenoate. The enzyme catalyses (5Z,8Z,11Z,14Z)-eicosatetraenoate + 2 O2 = (8S,15S)-dihydroperoxy-(5Z,9E,11Z,13E)-eicosatetraenoate. It carries out the reaction (14S,15R)-epoxy-(5Z,8Z,11Z)-eicosatrienoate + O2 = (8S)-hydroperoxy-(14S,15R)-epoxy-(5Z,9E,11Z)-eicosatrienoate. The catalysed reaction is (14S,15R)-epoxy-(5Z,8Z,11Z)-eicosatrienoate + O2 = (12S)-hydroperoxy-(14S,15R)-epoxy-(5Z,8Z,10E)-eicosatrienoate. It catalyses the reaction (14R,15S)-epoxy-(5Z,8Z,11Z)-eicosatrienoate + O2 = (5S)-hydroperoxy-(14R,15S)-epoxy-(6E,8Z,11Z)-eicosatrienoate. The enzyme catalyses (14R,15S)-epoxy-(5Z,8Z,11Z)-eicosatrienoate + O2 = (12S)-hydroperoxy-(14R,15S)-epoxy-(5Z,8Z,10E)-eicosatrienoate. It carries out the reaction (15R)-hydroperoxy-(5Z,8Z,11Z,13E)-eicosatetraenoate = 15-oxo-(5Z,8Z,11Z,13E)-eicosatetraenoate + H2O. The catalysed reaction is (15S)-hydroperoxy-(5Z,8Z,11Z,13E)-eicosatetraenoate = (14S,15S)-epoxy-(5Z,8Z,10E,12E)-eicosatetraenoate + H2O. It catalyses the reaction (12S)-hydroperoxy-(5Z,8Z,10E,14Z)-eicosatetraenoate = (8S)-hydroxy-(11S,12S)-epoxy-(5Z,9E,14Z)-eicosatrienoate. The enzyme catalyses (4Z,7Z,10Z,13Z,16Z)-docosapentaenoate + O2 = 14-hydroperoxy-(4Z,7Z,10Z,12E,16Z)-docosapentaenoate. It carries out the reaction (7Z,10Z,13Z,16Z,19Z)-docosapentaenoate + O2 = 14-hydroperoxy-(7Z,10Z,12E,16Z,19Z)-docosapentaenoate. The catalysed reaction is (4Z,7Z,10Z,13Z,16Z,19Z)-docosahexaenoate + O2 = (14S)-hydroperoxy-(4Z,7Z,10Z,12E,16Z,19Z)-docosahexaenoate. It catalyses the reaction (4Z,7Z,10Z,13Z,16Z,19Z)-docosahexaenoate + O2 = (17S)-hydroperoxy-(4Z,7Z,10Z,13Z,15E,19Z)-docosahexaenoate. The enzyme catalyses (7S)-hydroperoxy-(4Z,8E,10Z,13Z,16Z,19Z)-docosahexaenoate + O2 = (7S,14S)-dihydroperoxy-(4Z,8E,10Z,12E,16Z,19Z)-docosahexaenoate. It carries out the reaction (7S)-hydroperoxy-(4Z,8E,10Z,13Z,16Z,19Z)-docosahexaenoate + O2 = (7S,17S)-dihydroperoxy-(4Z,8E,10Z,13Z,15E,19Z)-docosahexaenoate. The catalysed reaction is (4Z,7Z,10Z,13Z,16Z,19Z)-docosahexaenoate + O2 = (11S)-hydroperoxy-(4Z,7Z,9E,13Z,16Z,19Z)-docosahexaenoate. It catalyses the reaction N-(5Z,8Z,11Z,14Z)-eicosatetraenoyl-taurine + O2 = N-(15S)-hydroperoxy-(5Z,8Z,11Z,13E)-eicosatetraenoyl-taurine. The enzyme catalyses N-(5Z,8Z,11Z,14Z)-eicosatetraenoyl-gamma-aminobutanoate + O2 = N-(15S)-hydroperoxy-(5Z,8Z,11Z,13E)-eicosatetraenoyl-gamma-aminobutanoate. It carries out the reaction N-(5Z,8Z,11Z,14Z)-eicosatetraenoyl-glycine + O2 = N-(15S)-hydroperoxy-(5Z,8Z,11Z,13E)-eicosatetraenoyl-glycine. The catalysed reaction is N-(5Z,8Z,11Z,14Z)-eicosatetraenoyl-L-alanine + O2 = N-(15S)-hydroperoxy-(5Z,8Z,11Z,13E)-eicosatetraenoyl-alanine. It catalyses the reaction N-(5Z,8Z,11Z,14Z)-eicosatetraenoyl-taurine + O2 = N-(12S)-hydroperoxy-(5Z,8Z,10E,14Z)-eicosatetraenoyl-taurine. The enzyme catalyses N-(5Z,8Z,11Z,14Z)-eicosatetraenoyl-gamma-aminobutanoate + O2 = N-(12S)-hydroperoxy-(5Z,8Z,10E,14Z)-eicosatetraenoyl-gamma-aminobutanoate. It carries out the reaction N-(5Z,8Z,11Z,14Z)-eicosatetraenoyl-glycine + O2 = N-(12S)-hydroperoxy-(5Z,8Z,10E,14Z)-eicosatetraenoyl-glycine. The catalysed reaction is N-(5Z,8Z,11Z,14Z)-eicosatetraenoyl-L-alanine + O2 = N-(12S)-hydroperoxy-(5Z,8Z,10E,14Z)-eicosatetraenoyl-alanine. The protein operates within lipid metabolism; hydroperoxy eicosatetraenoic acid biosynthesis. In terms of biological role, non-heme iron-containing dioxygenase that catalyzes the stereo-specific peroxidation of free and esterified polyunsaturated fatty acids generating a spectrum of bioactive lipid mediators. It inserts peroxyl groups at C12 or C15 of arachidonate ((5Z,8Z,11Z,14Z)-eicosatetraenoate) producing both 12-hydroperoxyeicosatetraenoate/12-HPETE and 15-hydroperoxyeicosatetraenoate/15-HPETE. It may then act on 12-HPETE to produce hepoxilins, which may show pro-inflammatory properties. Can also peroxidize linoleate ((9Z,12Z)-octadecadienoate) to 13-hydroperoxyoctadecadienoate. May participate in the sequential oxidations of DHA ((4Z,7Z,10Z,13Z,16Z,19Z)-docosahexaenoate) to generate specialized pro-resolving mediators (SPMs)like resolvin D5 ((7S,17S)-diHPDHA) and (7S,14S)-diHPDHA, that actively down-regulate the immune response and have anti-aggregation properties with platelets. Can convert epoxy fatty acids to hydroperoxy-epoxides derivatives followed by an intramolecular nucleophilic substitution leading to the formation of monocyclic endoperoxides. Plays an important role during the maintenance of self-tolerance by peroxidizing membrane-bound phosphatidylethanolamine which can then signal the sorting process for clearance of apoptotic cells during inflammation and prevent an autoimmune response. In addition to its role in the immune and inflammatory responses, this enzyme may play a role in epithelial wound healing in the cornea through production of lipoxin A4 (LXA(4)) and docosahexaenoic acid-derived neuroprotectin D1 (NPD1; 10R,17S-HDHA), both lipid autacoids exhibit anti-inflammatory and neuroprotective properties. Furthermore, it may regulate actin polymerization which is crucial for several biological processes such as the phagocytosis of apoptotic cells. It is also implicated in the generation of endogenous ligands for peroxisome proliferator activated receptor (PPAR-gamma), hence modulating macrophage development and function. It may also exert a negative effect on skeletal development by regulating bone mass through this pathway. As well as participates in ER stress and downstream inflammation in adipocytes, pancreatic islets, and liver. Finally, it is also involved in the cellular response to IL13/interleukin-13. In Oryctolagus cuniculus (Rabbit), this protein is Polyunsaturated fatty acid lipoxygenase ALOX15.